The primary structure comprises 70 residues: uncharacterized protein (70 aa).

A C2H2-type zinc finger spans residues Tyr-21 to His-43.

This is an uncharacterized protein from Saccharolobus islandicus (Sulfolobus islandicus).